Here is a 471-residue protein sequence, read N- to C-terminus: Monocarboxylate transporter 4 (471 aa).

Residues 1-17 (MGGAVVDEGPTGIKAPD) are Cytoplasmic-facing. A helical transmembrane segment spans residues 18-38 (GGWGWAVLFGCFIITGFSYAF). The Extracellular segment spans residues 39–61 (PKAVSVFFKELMHEFGIGYSDTA). Residues 62–82 (WISSILLAMLYGTGPLCSMCV) traverse the membrane as a helical segment. At 83–84 (NR) the chain is on the cytoplasmic side. A helical transmembrane segment spans residues 85–105 (FGCRPVMLVGGLFASLGMVAA). Residues 106-109 (SFCR) lie on the Extracellular side of the membrane. A helical transmembrane segment spans residues 110–130 (SIIQIYLTTGVITGLGLALNF). Over 131–149 (QPSLIMLNRYFNKRRPMAN) the chain is Cytoplasmic. The helical transmembrane segment at 150-170 (GLAAAGSPVFLCALSPLGQLL) threads the bilayer. Residues 171 to 179 (QDHYGWRGG) are Extracellular-facing. The helical transmembrane segment at 180–200 (FLILGGLLLNCCVCAALMRPL) threads the bilayer. Over 201–231 (VAPQASGGAEPHGPQRPSPRLLDLSVFRDRG) the chain is Cytoplasmic. A helical membrane pass occupies residues 232 to 252 (FLIYAVAASIMVLGLFVPPVF). The Extracellular segment spans residues 253-267 (VVSYAKDMGVPDTKA). Residues 268–288 (AFLLTILGFIDIFARPTAGFI) traverse the membrane as a helical segment. Residues 289–298 (TGLKKVRPYS) lie on the Cytoplasmic side of the membrane. A helical transmembrane segment spans residues 299-319 (VYLFSFAMFFNGFTDLTGSTA). Residues 320–321 (SD) lie on the Extracellular side of the membrane. The chain crosses the membrane as a helical span at residues 322-342 (YGGLVVFCIFFGISYGMVGAL). At 343-355 (QFEVLMAIVGTQK) the chain is on the cytoplasmic side. Residues 356–376 (FSSAIGLVLLLEAVAVLIGPP) form a helical membrane-spanning segment. Residues 377–391 (SGGKLLDATKVYKYV) are Extracellular-facing. The helical transmembrane segment at 392-412 (FILAGAEVLTSSLVLLLGNFF) threads the bilayer. At 413 to 471 (CIGKRKRPEVTKPEEVASEEEKLHKPPVDVRVDSREVEHFLKAEPEKNGEVVHTPETSV) the chain is on the cytoplasmic side. Basolateral sorting signal regions lie at residues 429–447 (ASEE…VDSR) and 447–471 (REVE…ETSV). The residue at position 430 (serine 430) is a Phosphoserine. The residue at position 466 (threonine 466) is a Phosphothreonine. Phosphoserine is present on serine 470.

It belongs to the major facilitator superfamily. Monocarboxylate porter (TC 2.A.1.13) family. Interacts with BSG; interaction mediates SLC16A3 targeting to the plasma membrane. As to expression, detected in testis, small intestine, parotid gland, lung and brain. Small amounts are detected in heart, kidney and spleen. Expressed in skeletal muscle.

Its subcellular location is the cell membrane. It is found in the basolateral cell membrane. The catalysed reaction is (S)-lactate(in) + H(+)(in) = (S)-lactate(out) + H(+)(out). It carries out the reaction pyruvate(out) + H(+)(out) = pyruvate(in) + H(+)(in). In terms of biological role, proton-dependent transporter of monocarboxylates such as L-lactate and pyruvate. Plays a predominant role in the L-lactate efflux from highly glycolytic cells. In Rattus norvegicus (Rat), this protein is Monocarboxylate transporter 4 (Slc16a3).